The sequence spans 540 residues: Phosphoenolpyruvate carboxykinase (ATP) (540 aa).

Position 65 (Arg65) interacts with substrate. Lys87 bears the N6-acetyllysine mark. Substrate-binding residues include Tyr207 and Lys213. ATP is bound by residues Lys213, His232, and 248-256; that span reads GLSGTGKTT. Lys213 and His232 together coordinate Mn(2+). Mn(2+) is bound at residue Asp269. Residues Glu297, Arg333, 449-450, and Thr455 contribute to the ATP site; that span reads RI. Arg333 is a substrate binding site. An N6-acetyllysine modification is found at Lys523.

This sequence belongs to the phosphoenolpyruvate carboxykinase (ATP) family. As to quaternary structure, monomer. Mn(2+) is required as a cofactor.

Its subcellular location is the cytoplasm. The enzyme catalyses oxaloacetate + ATP = phosphoenolpyruvate + ADP + CO2. The protein operates within carbohydrate biosynthesis; gluconeogenesis. Its function is as follows. Involved in the gluconeogenesis. Catalyzes the conversion of oxaloacetate (OAA) to phosphoenolpyruvate (PEP) through direct phosphoryl transfer between the nucleoside triphosphate and OAA. This is Phosphoenolpyruvate carboxykinase (ATP) from Shigella flexneri.